We begin with the raw amino-acid sequence, 248 residues long: Homeobox protein Hox-A4 (248 aa).

The disordered stretch occupies residues 23 to 107; it reads YQQSGYIPNP…PDGGAGANAS (85 aa). Positions 35–51 are enriched in basic and acidic residues; that stretch reads YYERPKDTGFPHHDEPS. The Antp-type hexapeptide motif lies at 128-133; sequence VYPWMK. Residues 149-208 constitute a DNA-binding region (homeobox); that stretch reads PKRSRTAYTRQQALELEKEFHFNRYLTRRRRVEIAHTMCLSERQVKIWFQNRRMKWKKEH. A disordered region spans residues 207-248; sequence EHKLPNTKIRSSSSASSSASGAQQQQIKTGQQLVPTPCTAGL. The span at 217–238 shows a compositional bias: low complexity; the sequence is SSSSASSSASGAQQQQIKTGQQ.

The protein belongs to the Antp homeobox family. Deformed subfamily.

The protein localises to the nucleus. In terms of biological role, sequence-specific transcription factor which is part of a developmental regulatory system that provides cells with specific positional identities on the anterior-posterior axis. The polypeptide is Homeobox protein Hox-A4 (hoxa4) (Morone saxatilis (Striped bass)).